The following is a 488-amino-acid chain: pH-response regulator protein palC (488 aa).

In terms of domain architecture, BRO1 spans 2–430; that stretch reads PPYLYRLPTT…TVAFQPVPPV (429 aa). Residues 449–488 form a disordered region; sequence PPPSKFSPSRIGHLNEEQGNDSPELGETEDTSYAGKGNYF.

Belongs to the palC family.

In terms of biological role, required for the proteolytic cleavage of the transcription factor RIM101 in response to alkaline ambient pH. The protein is pH-response regulator protein palC of Cryptococcus neoformans var. neoformans serotype D (strain B-3501A) (Filobasidiella neoformans).